A 150-amino-acid chain; its full sequence is C-type lectin 37Db (150 aa).

The N-terminal stretch at 1–20 (MMVKLLLLFLVCWSALPLES) is a signal peptide. The C-type lectin domain occupies 31-148 (IGEKQYYISL…CYSSVAFICQ (118 aa)). 2 disulfide bridges follow: Cys52/Cys147 and Cys122/Cys139. Asn107 and Asn115 each carry an N-linked (GlcNAc...) asparagine glycan.

It localises to the secreted. Its function is as follows. Galactose-specific lectin that displays calcium-dependent activity. Binds to the surface of hemocytes and enhances hemocyte encapsulation and melanization. This is likely by interacting with carbohydrates on the surface of the hemocytes. Also displays agglutination activity against the Gram-negative bacterium E.coli. The protein is C-type lectin 37Db of Drosophila melanogaster (Fruit fly).